Consider the following 329-residue polypeptide: MMKKYYESDADLSVLSGKKIAVIGYGSQGRGQSLNLRDSGLDVIIGLRKGKSWDAAAKDGMNVMTVAEAAKKADIIQILLPDELQAAVYKNEILPHLSENKVLMFSHGFNIHFGQIQPPGNVDVIMVAPKGPGFMVRRQYEEGKGVPALIAIHQDHTCKAHKTALAYAKGIGATRAVVLETTFREETETDLFGEQAVLCGGTASLIKAGFETLVDAGYAPEMAYLEVCHELKLIVDLIYEGGLTNMRQYVSNTAQYGDMTRGPRVIGPEAYEAMEEILAEIQSGEFAKEWMLENMVNRPVFNALTKADEEHLLEETGKEVRAMMPQFRK.

Residues 2 to 181 (MKKYYESDAD…GATRAVVLET (180 aa)) enclose the KARI N-terminal Rossmann domain. NADP(+) is bound by residues 25–28 (YGSQ), arginine 48, serine 52, and 82–85 (DELQ). Histidine 107 is a catalytic residue. Glycine 133 is a binding site for NADP(+). Residues 182–327 (TFREETETDL…KEVRAMMPQF (146 aa)) enclose the KARI C-terminal knotted domain. Mg(2+) is bound by residues aspartate 190, glutamate 194, glutamate 226, and glutamate 230. Position 251 (serine 251) interacts with substrate.

It belongs to the ketol-acid reductoisomerase family. The cofactor is Mg(2+).

It carries out the reaction (2R)-2,3-dihydroxy-3-methylbutanoate + NADP(+) = (2S)-2-acetolactate + NADPH + H(+). It catalyses the reaction (2R,3R)-2,3-dihydroxy-3-methylpentanoate + NADP(+) = (S)-2-ethyl-2-hydroxy-3-oxobutanoate + NADPH + H(+). The protein operates within amino-acid biosynthesis; L-isoleucine biosynthesis; L-isoleucine from 2-oxobutanoate: step 2/4. Its pathway is amino-acid biosynthesis; L-valine biosynthesis; L-valine from pyruvate: step 2/4. In terms of biological role, involved in the biosynthesis of branched-chain amino acids (BCAA). Catalyzes an alkyl-migration followed by a ketol-acid reduction of (S)-2-acetolactate (S2AL) to yield (R)-2,3-dihydroxy-isovalerate. In the isomerase reaction, S2AL is rearranged via a Mg-dependent methyl migration to produce 3-hydroxy-3-methyl-2-ketobutyrate (HMKB). In the reductase reaction, this 2-ketoacid undergoes a metal-dependent reduction by NADPH to yield (R)-2,3-dihydroxy-isovalerate. This is Ketol-acid reductoisomerase (NADP(+)) from Methanoregula boonei (strain DSM 21154 / JCM 14090 / 6A8).